Reading from the N-terminus, the 93-residue chain is MKLINIGFGNIVSANRLVAIVSPESAPIKRIIQEARERGMLVDATYGRRTRAVIITDSDHIILSAVQPETVAHRLNTKEAEDVEVDDEEEIDE.

Positions 74-93 are disordered; that stretch reads RLNTKEAEDVEVDDEEEIDE. Over residues 81-93 the composition is skewed to acidic residues; that stretch reads EDVEVDDEEEIDE.

Belongs to the RemA family.

The chain is Putative regulatory protein Cthe_1316 from Acetivibrio thermocellus (strain ATCC 27405 / DSM 1237 / JCM 9322 / NBRC 103400 / NCIMB 10682 / NRRL B-4536 / VPI 7372) (Clostridium thermocellum).